The primary structure comprises 497 residues: tRNA-2-methylthio-N(6)-dimethylallyladenosine synthase (497 aa).

Residues 1–10 show a composition bias toward basic and acidic residues; that stretch reads MTLLDSDSRQ. Residues 1 to 26 form a disordered region; that stretch reads MTLLDSDSRQSAEVLPAAGPAPDRPR. Positions 26-142 constitute an MTTase N-terminal domain; sequence RTYQVRTFGC…LPVLLERARI (117 aa). [4Fe-4S] cluster contacts are provided by C35, C71, C105, C179, C183, and C186. The Radical SAM core domain occupies 165 to 395; sequence RESVYAAWVA…VALVEQIALE (231 aa). Residues 398–464 enclose the TRAM domain; that stretch reads QAQVGRVVEV…PHCLIADQVL (67 aa).

This sequence belongs to the methylthiotransferase family. MiaB subfamily. Monomer. Requires [4Fe-4S] cluster as cofactor.

It is found in the cytoplasm. The enzyme catalyses N(6)-dimethylallyladenosine(37) in tRNA + (sulfur carrier)-SH + AH2 + 2 S-adenosyl-L-methionine = 2-methylsulfanyl-N(6)-dimethylallyladenosine(37) in tRNA + (sulfur carrier)-H + 5'-deoxyadenosine + L-methionine + A + S-adenosyl-L-homocysteine + 2 H(+). Its function is as follows. Catalyzes the methylthiolation of N6-(dimethylallyl)adenosine (i(6)A), leading to the formation of 2-methylthio-N6-(dimethylallyl)adenosine (ms(2)i(6)A) at position 37 in tRNAs that read codons beginning with uridine. In Acidothermus cellulolyticus (strain ATCC 43068 / DSM 8971 / 11B), this protein is tRNA-2-methylthio-N(6)-dimethylallyladenosine synthase.